Reading from the N-terminus, the 398-residue chain is Nematocin receptor 2 (398 aa).

The Extracellular portion of the chain corresponds to 1 to 25 (MNNNTLNITNQRTAAAMSQIYFLVV). Residues asparagine 3 and asparagine 7 are each glycosylated (N-linked (GlcNAc...) asparagine). Residues 26 to 46 (YQTAVMIVSLLGNLFLLFVIF) form a helical membrane-spanning segment. Residues 47 to 58 (RANQVMKRRVSP) are Cytoplasmic-facing. The helical transmembrane segment at 59-79 (VQLLIIHTCVADLLFALLSLG) threads the bilayer. The Extracellular portion of the chain corresponds to 80 to 99 (TEILTLRTYPQYYGSNFVCK). A disulfide bridge links cysteine 98 with cysteine 173. The chain crosses the membrane as a helical span at residues 100–120 (LMRYVQMFPMYASPFLLVAIS). Topologically, residues 121–143 (ADRYQAICRPLAHFRSSRYRRPN) are cytoplasmic. A helical membrane pass occupies residues 144-164 (WMAAIAWGLALVLSIPQFFVW). The Extracellular portion of the chain corresponds to 165–187 (TKHSKTGRCSTIYGQNKNTVKIT). The chain crosses the membrane as a helical span at residues 188–208 (YVIMFNTLAWLLPSILAAVFY). Residues 209-271 (YCVCKAVRLS…DRKRVQTVRL (63 aa)) lie on the Cytoplasmic side of the membrane. A helical membrane pass occupies residues 272 to 292 (TITIVACNFFLWMPFCLINVI). Topologically, residues 293-302 (QALWPEISHI) are extracellular. Residues 303–325 (MFINYVAILGNLNSCLNPWIYIL) traverse the membrane as a helical segment. At 326 to 398 (FNRSHVRKAL…DSTSLKTNSN (73 aa)) the chain is on the cytoplasmic side.

Belongs to the G-protein coupled receptor 1 family. Vasopressin/oxytocin receptor subfamily. Detected in the ADL sensory neurons, the RMED and RMEV motor neurons, and the PQR tail neuron. In males, detected in SPC tail neurons involved in spicule penetration and sperm transfer, and male-specific oblique muscles involved in vulval contact.

It localises to the cell membrane. Not directly activated by nematocin. May modulate activity of the nematocin receptor ntr-1, leading to reduced intracellular cAMP production. Plays a role in male mating behavior. This Caenorhabditis elegans protein is Nematocin receptor 2.